The chain runs to 1167 residues: Carbamoyl phosphate synthase large chain (1167 aa).

A carboxyphosphate synthetic domain region spans residues 1-455 (MPRRTDIKSI…SLQKALRGLE (455 aa)). The ATP site is built by Arg-129, Arg-221, Gly-227, Gly-228, Glu-260, Val-262, Glu-267, Gly-293, Val-294, His-295, Gln-337, and Glu-351. Residues 184–380 (LETRWNLGEG…IAKIAAKLAV (197 aa)) enclose the ATP-grasp 1 domain. Mg(2+) is bound by residues Gln-337, Glu-351, and Asn-353. 3 residues coordinate Mn(2+): Gln-337, Glu-351, and Asn-353. An oligomerization domain region spans residues 456-619 (TGLTGLDEIE…PFAGALANEA (164 aa)). Residues 620-1031 (QVSSRKKVVI…AFAKSQLGAG (412 aa)) form a carbamoyl phosphate synthetic domain region. The 213-residue stretch at 748-960 (QKLLHKLGLS…IAKIAARIMA (213 aa)) folds into the ATP-grasp 2 domain. ATP-binding residues include Arg-784, Thr-844, Leu-846, Glu-851, Gly-876, Ile-877, His-878, Ser-879, Gln-919, and Glu-931. Mg(2+) contacts are provided by Gln-919, Glu-931, and Asn-933. 3 residues coordinate Mn(2+): Gln-919, Glu-931, and Asn-933. One can recognise an MGS-like domain in the interval 1032–1167 (VDLPRSGTLF…EVRPLQEYFA (136 aa)). The segment at 1032–1167 (VDLPRSGTLF…EVRPLQEYFA (136 aa)) is allosteric domain.

The protein belongs to the CarB family. As to quaternary structure, composed of two chains; the small (or glutamine) chain promotes the hydrolysis of glutamine to ammonia, which is used by the large (or ammonia) chain to synthesize carbamoyl phosphate. Tetramer of heterodimers (alpha,beta)4. Mg(2+) is required as a cofactor. Requires Mn(2+) as cofactor.

The catalysed reaction is hydrogencarbonate + L-glutamine + 2 ATP + H2O = carbamoyl phosphate + L-glutamate + 2 ADP + phosphate + 2 H(+). It catalyses the reaction hydrogencarbonate + NH4(+) + 2 ATP = carbamoyl phosphate + 2 ADP + phosphate + 2 H(+). The protein operates within amino-acid biosynthesis; L-arginine biosynthesis; carbamoyl phosphate from bicarbonate: step 1/1. It functions in the pathway pyrimidine metabolism; UMP biosynthesis via de novo pathway; (S)-dihydroorotate from bicarbonate: step 1/3. Its function is as follows. Large subunit of the glutamine-dependent carbamoyl phosphate synthetase (CPSase). CPSase catalyzes the formation of carbamoyl phosphate from the ammonia moiety of glutamine, carbonate, and phosphate donated by ATP, constituting the first step of 2 biosynthetic pathways, one leading to arginine and/or urea and the other to pyrimidine nucleotides. The large subunit (synthetase) binds the substrates ammonia (free or transferred from glutamine from the small subunit), hydrogencarbonate and ATP and carries out an ATP-coupled ligase reaction, activating hydrogencarbonate by forming carboxy phosphate which reacts with ammonia to form carbamoyl phosphate. The protein is Carbamoyl phosphate synthase large chain of Mesorhizobium japonicum (strain LMG 29417 / CECT 9101 / MAFF 303099) (Mesorhizobium loti (strain MAFF 303099)).